The primary structure comprises 439 residues: Large ribosomal subunit protein mL44 (439 aa).

2 disordered regions span residues 39-73 (QSTA…SLPS) and 247-282 (KAME…YGNP). Residues 247 to 257 (KAMEEQDQDKT) show a composition bias toward basic and acidic residues. Residues 258–274 (PDEEEAEMVANEQDQDV) show a composition bias toward acidic residues.

This sequence belongs to the ribonuclease III family. Mitochondrion-specific ribosomal protein mL44 subfamily. In terms of assembly, component of the mitochondrial large ribosomal subunit (mt-LSU). Mature N.crassa 74S mitochondrial ribosomes consist of a small (37S) and a large (54S) subunit. The 37S small subunit contains a 16S ribosomal RNA (16S mt-rRNA) and 32 different proteins. The 54S large subunit contains a 23S rRNA (23S mt-rRNA) and 42 different proteins. mL44 forms a heterodimer with mL57 and stabilizes rRNA expansion segments 1/2 at a membrane-facing protuberance close to the point of attachment of the ribosome to the translocon in the membrane.

Its subcellular location is the mitochondrion. Component of the mitochondrial ribosome (mitoribosome), a dedicated translation machinery responsible for the synthesis of mitochondrial genome-encoded proteins, including at least some of the essential transmembrane subunits of the mitochondrial respiratory chain. The mitoribosomes are attached to the mitochondrial inner membrane and translation products are cotranslationally integrated into the membrane. The polypeptide is Large ribosomal subunit protein mL44 (mrpl3) (Neurospora crassa (strain ATCC 24698 / 74-OR23-1A / CBS 708.71 / DSM 1257 / FGSC 987)).